A 39-amino-acid polypeptide reads, in one-letter code: Photosystem II reaction center protein J (39 aa).

A helical membrane pass occupies residues 9–29; that stretch reads LWIIATFGGIAALTVVGLFIY.

This sequence belongs to the PsbJ family. PSII is composed of 1 copy each of membrane proteins PsbA, PsbB, PsbC, PsbD, PsbE, PsbF, PsbH, PsbI, PsbJ, PsbK, PsbL, PsbM, PsbT, PsbX, PsbY, PsbZ, Psb30/Ycf12, at least 3 peripheral proteins of the oxygen-evolving complex and a large number of cofactors. It forms dimeric complexes.

It is found in the plastid. Its subcellular location is the chloroplast thylakoid membrane. In terms of biological role, one of the components of the core complex of photosystem II (PSII). PSII is a light-driven water:plastoquinone oxidoreductase that uses light energy to abstract electrons from H(2)O, generating O(2) and a proton gradient subsequently used for ATP formation. It consists of a core antenna complex that captures photons, and an electron transfer chain that converts photonic excitation into a charge separation. The polypeptide is Photosystem II reaction center protein J (Guillardia theta (Cryptophyte)).